A 188-amino-acid polypeptide reads, in one-letter code: NADH-quinone oxidoreductase subunit B (188 aa).

Positions 67, 68, 132, and 162 each coordinate [4Fe-4S] cluster.

Belongs to the complex I 20 kDa subunit family. In terms of assembly, NDH-1 is composed of 14 different subunits. Subunits NuoB, C, D, E, F, and G constitute the peripheral sector of the complex. It depends on [4Fe-4S] cluster as a cofactor.

It localises to the cell inner membrane. The catalysed reaction is a quinone + NADH + 5 H(+)(in) = a quinol + NAD(+) + 4 H(+)(out). Its function is as follows. NDH-1 shuttles electrons from NADH, via FMN and iron-sulfur (Fe-S) centers, to quinones in the respiratory chain. Couples the redox reaction to proton translocation (for every two electrons transferred, four hydrogen ions are translocated across the cytoplasmic membrane), and thus conserves the redox energy in a proton gradient. This chain is NADH-quinone oxidoreductase subunit B, found in Maricaulis maris (strain MCS10) (Caulobacter maris).